The following is a 140-amino-acid chain: Probable glycine cleavage system H protein (140 aa).

The Lipoyl-binding domain occupies 22–114 (RAIIGITSYA…YEEGWIVVLE (93 aa)). At lysine 63 the chain carries N6-lipoyllysine.

This sequence belongs to the GcvH family. As to quaternary structure, the glycine cleavage system is composed of four proteins: P, T, L and H. (R)-lipoate serves as cofactor.

Its function is as follows. The glycine cleavage system catalyzes the degradation of glycine. The H protein shuttles the methylamine group of glycine from the P protein to the T protein. In Korarchaeum cryptofilum (strain OPF8), this protein is Probable glycine cleavage system H protein.